Consider the following 353-residue polypeptide: Phosphate acyltransferase (353 aa).

Belongs to the PlsX family. As to quaternary structure, homodimer. Probably interacts with PlsY.

It is found in the cytoplasm. The enzyme catalyses a fatty acyl-[ACP] + phosphate = an acyl phosphate + holo-[ACP]. It participates in lipid metabolism; phospholipid metabolism. In terms of biological role, catalyzes the reversible formation of acyl-phosphate (acyl-PO(4)) from acyl-[acyl-carrier-protein] (acyl-ACP). This enzyme utilizes acyl-ACP as fatty acyl donor, but not acyl-CoA. The sequence is that of Phosphate acyltransferase from Myxococcus xanthus (strain DK1622).